The sequence spans 32 residues: MSDIN-like toxin proprotein 1 (32 aa).

Residues 1–10 constitute a propeptide that is removed on maturation; it reads MSDINATRLP. Residues 11–18 constitute a cross-link (cyclopeptide (Ile-Pro)); sequence IFWFIYFP. The propeptide occupies 19-32; the sequence is CVSDVDSTLTRGER.

The protein belongs to the MSDIN fungal toxin family. In terms of processing, processed by the macrocyclase-peptidase enzyme POPB to yield a toxic cyclic octapeptide. POPB first removes 10 residues from the N-terminus. Conformational trapping of the remaining peptide forces the enzyme to release this intermediate rather than proceed to macrocyclization. The enzyme rebinds the remaining peptide in a different conformation and catalyzes macrocyclization of the N-terminal 8 residues. As to expression, expressed in basidiocarps.

Probable toxin that belongs to the MSDIN-like toxin family responsible for a large number of food poisoning cases and deaths. The polypeptide is MSDIN-like toxin proprotein 1 (Amanita exitialis (Guangzhou destroying angel)).